The primary structure comprises 467 residues: Cytochrome P450 76A1 (467 aa).

Cys410 lines the heme pocket.

Belongs to the cytochrome P450 family. Heme serves as cofactor.

This is Cytochrome P450 76A1 (CYP76A1) from Solanum melongena (Eggplant).